The primary structure comprises 248 residues: Anamorsin homolog (248 aa).

Residues 4 to 129 (FKGLQKSLYI…ETGSSARLSF (126 aa)) are N-terminal SAM-like domain. The segment at 130-161 (AKKNASAINVWKISGDDEELIDEEELLDEEDK) is linker. Cys-172, Cys-181, Cys-184, and Cys-186 together coordinate [2Fe-2S] cluster. The interval 172–186 (CSTTGKRKACKNCSC) is fe-S binding site A. Residues Cys-209, Cys-212, Cys-220, and Cys-223 each coordinate [4Fe-4S] cluster. 2 consecutive short sequence motifs (cx2C motif) follow at residues 209-212 (CGNC) and 220-223 (CSTC). A fe-S binding site B region spans residues 209–223 (CGNCYLGDAFRCSTC).

This sequence belongs to the anamorsin family. As to quaternary structure, monomer. Requires [2Fe-2S] cluster as cofactor. [4Fe-4S] cluster is required as a cofactor.

Its subcellular location is the cytoplasm. The protein resides in the mitochondrion intermembrane space. Component of the cytosolic iron-sulfur (Fe-S) protein assembly (CIA) machinery. Required for the maturation of extramitochondrial Fe-S proteins. Part of an electron transfer chain functioning in an early step of cytosolic Fe-S biogenesis, facilitating the de novo assembly of a [4Fe-4S] cluster on the cytosolic Fe-S scaffold complex. Electrons are transferred from NADPH via a FAD- and FMN-containing diflavin oxidoreductase. Together with the diflavin oxidoreductase, also required for the assembly of the diferric tyrosyl radical cofactor of ribonucleotide reductase (RNR), probably by providing electrons for reduction during radical cofactor maturation in the catalytic small subunit. The sequence is that of Anamorsin homolog from Drosophila erecta (Fruit fly).